A 93-amino-acid polypeptide reads, in one-letter code: Cobalt transport protein CbiN (93 aa).

The next 2 helical transmembrane spans lie at 5–25 (LMLLVMVVALVILPFFINHGG) and 63–83 (LLFTLQGSLGAAVIFYILGYC).

Belongs to the CbiN family. Forms an energy-coupling factor (ECF) transporter complex composed of an ATP-binding protein (A component, CbiO), a transmembrane protein (T component, CbiQ) and 2 possible substrate-capture proteins (S components, CbiM and CbiN) of unknown stoichimetry.

The protein resides in the cell inner membrane. Its pathway is cofactor biosynthesis; adenosylcobalamin biosynthesis. Its function is as follows. Part of the energy-coupling factor (ECF) transporter complex CbiMNOQ involved in cobalt import. The protein is Cobalt transport protein CbiN of Salmonella paratyphi B (strain ATCC BAA-1250 / SPB7).